Reading from the N-terminus, the 391-residue chain is Multidrug resistance protein MdtL (391 aa).

Over 1-3 the chain is Cytoplasmic; the sequence is MSR. Residues 4–24 form a helical membrane-spanning segment; sequence FLICSFALVLLYPAGIDMYLV. Residues 25–41 are Periplasmic-facing; the sequence is GLPRIAADLNASEAQLH. A helical membrane pass occupies residues 42-62; sequence IAFSVYLAGMAAAMLFAGKVA. Topologically, residues 63 to 68 are cytoplasmic; sequence DRSGRK. A helical transmembrane segment spans residues 69-89; it reads PVAIPGAALFIIASVFCSLAE. Topologically, residues 90-92 are periplasmic; it reads TSA. The chain crosses the membrane as a helical span at residues 93 to 113; sequence LFLAGRFLQGLGAGCCYVVAF. At 114-130 the chain is on the cytoplasmic side; it reads AILRDTLDDRRRAKVLS. A helical membrane pass occupies residues 131-151; sequence LLNGITCIIPVLAPVLGHLIM. Topologically, residues 152 to 157 are periplasmic; the sequence is LKFPWQ. A helical transmembrane segment spans residues 158 to 178; it reads SLFWTMATMGIAVLMLSLFIL. Residues 179–202 lie on the Cytoplasmic side of the membrane; sequence KETRPAAPAASDKPRENSESLLNR. A helical transmembrane segment spans residues 203 to 222; the sequence is FFLSRVVITTLSVSVILTFV. The Periplasmic segment spans residues 223–244; the sequence is NTSPVLLMEIMGFERGEYATIM. A helical transmembrane segment spans residues 245 to 265; it reads ALTAGVSMTVSFSTPFALGIF. The Cytoplasmic portion of the chain corresponds to 266-268; it reads KPR. A helical membrane pass occupies residues 269–289; the sequence is TLMITSQVLFLAAGITLAVSP. The Periplasmic portion of the chain corresponds to 290-292; the sequence is SHA. A helical transmembrane segment spans residues 293–313; sequence VSLFGITLICAGFSVGFGVAM. Residues 314 to 330 are Cytoplasmic-facing; sequence SQALGPFSLRAGVASST. Residues 331–351 traverse the membrane as a helical segment; the sequence is LGIAQVCGSSLWIWLAAVVGI. Topologically, residues 352–355 are periplasmic; the sequence is GAWN. Residues 356-376 form a helical membrane-spanning segment; the sequence is MLIGILIACSIVSLLLIMFVA. The Cytoplasmic portion of the chain corresponds to 377-391; sequence PGRPVAAHEEIHHHA.

The protein belongs to the major facilitator superfamily. DHA1 family. MdtL (TC 2.A.1.2.22) subfamily.

Its subcellular location is the cell inner membrane. Its function is as follows. Confers resistance to chloramphenicol. The protein is Multidrug resistance protein MdtL of Escherichia coli O6:K15:H31 (strain 536 / UPEC).